Reading from the N-terminus, the 472-residue chain is Estrogen receptor beta (472 aa).

A modulating region spans residues 1–104 (MAFCSPAMMN…NPGSKRDAHF (104 aa)). 2 NR C4-type zinc fingers span residues 105–125 (CAVCSDYASGYHYGVWSCEGC) and 141–165 (CPATNQCTIDKNRRKSCQACRLRKC). Residues 105–170 (CAVCSDYASG…RLRKCYEVGM (66 aa)) constitute a DNA-binding region (nuclear receptor). The NR LBD domain maps to 217–449 (SPEQFVLTLL…DLLLEMLNAH (233 aa)).

The protein belongs to the nuclear hormone receptor family. NR3 subfamily. As to quaternary structure, binds DNA as a homodimer. Can form a heterodimer with ER-alpha. A high expression is seen in the telencephalon, diencephalon, pituitary, testis and kidneys but little or no expression is seen in the cerebellum, pectoral muscle and adrenal gland.

Its subcellular location is the nucleus. In terms of biological role, binds estrogens with an affinity similar to that of ER-alpha, and activates expression of reporter genes containing estrogen response elements (ERE) in an estrogen-dependent manner. In Coturnix japonica (Japanese quail), this protein is Estrogen receptor beta (ESR2).